A 129-amino-acid polypeptide reads, in one-letter code: Large ribosomal subunit protein bL12 (129 aa).

Belongs to the bacterial ribosomal protein bL12 family. Homodimer. Part of the ribosomal stalk of the 50S ribosomal subunit. Forms a multimeric L10(L12)X complex, where L10 forms an elongated spine to which 2 to 4 L12 dimers bind in a sequential fashion. Binds GTP-bound translation factors.

In terms of biological role, forms part of the ribosomal stalk which helps the ribosome interact with GTP-bound translation factors. Is thus essential for accurate translation. The protein is Large ribosomal subunit protein bL12 of Solidesulfovibrio magneticus (strain ATCC 700980 / DSM 13731 / RS-1) (Desulfovibrio magneticus).